Reading from the N-terminus, the 110-residue chain is MAKINLTPKKIYEQEFKTSIRGYDKTEVDEFLDDVIKDYTVYIALVKELQEENAKLKAKATSAPASRPAYASATSEPSHATTNIASASNYDILKRISRLEKEVFGKQIVE.

Residues 37 to 63 (KDYTVYIALVKELQEENAKLKAKATSA) adopt a coiled-coil conformation. The interval 59 to 79 (KATSAPASRPAYASATSEPSH) is disordered. The span at 60-75 (ATSAPASRPAYASATS) shows a compositional bias: low complexity.

This sequence belongs to the GpsB family. Forms polymers through the coiled coil domains. Interacts with PBP1, MreC and EzrA.

The protein localises to the cytoplasm. Divisome component that associates with the complex late in its assembly, after the Z-ring is formed, and is dependent on DivIC and PBP2B for its recruitment to the divisome. Together with EzrA, is a key component of the system that regulates PBP1 localization during cell cycle progression. Its main role could be the removal of PBP1 from the cell pole after pole maturation is completed. Also contributes to the recruitment of PBP1 to the division complex. Not essential for septum formation. The protein is Cell cycle protein GpsB of Streptococcus thermophilus (strain CNRZ 1066).